A 108-amino-acid polypeptide reads, in one-letter code: Cell division protein FtsL (108 aa).

Over 1-24 the chain is Cytoplasmic; sequence MSKDTASQPSLTKLIGLDIFGVGR. The chain crosses the membrane as a helical span at residues 25–45; sequence LHAILLICIFLSAIGVVLATH. The Periplasmic portion of the chain corresponds to 46–108; sequence NTRQMTVQRE…PDKEVIIKLR (63 aa).

Belongs to the FtsL family. As to quaternary structure, part of a complex composed of FtsB, FtsL and FtsQ.

The protein resides in the cell inner membrane. In terms of biological role, essential cell division protein. May link together the upstream cell division proteins, which are predominantly cytoplasmic, with the downstream cell division proteins, which are predominantly periplasmic. The chain is Cell division protein FtsL from Aliivibrio fischeri (strain ATCC 700601 / ES114) (Vibrio fischeri).